A 468-amino-acid polypeptide reads, in one-letter code: UDP-N-acetylmuramate--L-alanine ligase (468 aa).

114–120 (GTHGKTT) contacts ATP.

The protein belongs to the MurCDEF family.

The protein resides in the cytoplasm. The catalysed reaction is UDP-N-acetyl-alpha-D-muramate + L-alanine + ATP = UDP-N-acetyl-alpha-D-muramoyl-L-alanine + ADP + phosphate + H(+). The protein operates within cell wall biogenesis; peptidoglycan biosynthesis. Functionally, cell wall formation. The sequence is that of UDP-N-acetylmuramate--L-alanine ligase from Rhodopseudomonas palustris (strain HaA2).